Reading from the N-terminus, the 1333-residue chain is Xanthine dehydrogenase/oxidase (1333 aa).

The 2Fe-2S ferredoxin-type domain occupies 4–91 (DKLVFFVNGR…HVAVTTVEGI (88 aa)). Residues Cys43, Cys48, Cys51, Cys73, Cys113, Cys116, Cys148, and Cys150 each contribute to the [2Fe-2S] cluster site. The FAD-binding PCMH-type domain occupies 229-414 (FEGERVTWIQ…LSIEIPYSRE (186 aa)). FAD contacts are provided by residues 257–264 (LVVGNTEI), Phe337, 347–351 (SVGGN), Asp360, Leu404, and Lys422. 2 disulfides stabilise this stretch: Cys509-Cys1318 and Cys536-Cys993. Positions 768 and 799 each coordinate Mo-molybdopterin. 2 residues coordinate substrate: Glu803 and Arg881. Arg913 serves as a coordination point for Mo-molybdopterin. Residues Phe915 and Thr1011 each coordinate substrate. Ala1080 contributes to the Mo-molybdopterin binding site. The Proton acceptor role is filled by Glu1262.

The protein belongs to the xanthine dehydrogenase family. In terms of assembly, homodimer. Interacts with BTN1A1. The cofactor is [2Fe-2S] cluster. It depends on FAD as a cofactor. Mo-molybdopterin is required as a cofactor. In terms of processing, subject to partial proteolysis; this alters the enzyme from the dehydrogenase form (D) to the oxidase form (O). Contains sulfhydryl groups that are easily oxidized (in vitro); this alters the enzyme from the dehydrogenase form (D) to the oxidase form (O). As to expression, detected in milk (at protein level).

The protein localises to the cytoplasm. It localises to the peroxisome. Its subcellular location is the secreted. The enzyme catalyses xanthine + NAD(+) + H2O = urate + NADH + H(+). It catalyses the reaction hypoxanthine + NAD(+) + H2O = xanthine + NADH + H(+). It carries out the reaction xanthine + O2 + H2O = urate + H2O2. Can be converted from the dehydrogenase form (D) to the oxidase form (O) irreversibly by proteolysis or reversibly through the oxidation of sulfhydryl groups. Its function is as follows. Key enzyme in purine degradation. Catalyzes the oxidation of hypoxanthine to xanthine. Catalyzes the oxidation of xanthine to uric acid. Contributes to the generation of reactive oxygen species. Has also low oxidase activity towards aldehydes (in vitro). The chain is Xanthine dehydrogenase/oxidase (XDH) from Homo sapiens (Human).